The sequence spans 29 residues: Myosin heavy chain, muscle (29 aa).

Over residues 1–16 (SKYESEGVARSEELQE) the composition is skewed to basic and acidic residues. Positions 1–29 (SKYESEGVARSEELQEVHQAFADAGRKPI) are disordered.

As to quaternary structure, muscle myosin is a hexameric protein that consists of 2 heavy chain subunits (MHC), 2 alkali light chain subunits (MLC) and 2 regulatory light chain subunits (MLC-2).

It localises to the cytoplasm. The protein localises to the myofibril. Its function is as follows. Muscle contraction. This is Myosin heavy chain, muscle from Bombyx mori (Silk moth).